Reading from the N-terminus, the 739-residue chain is MLHELLLALLGYTGDLIIDRRDNNLSANTPISDECTFKLAPDISFIDPSDRELIERIITLGFYYRELERFSAKSRNLNWIRSENANPLENKEKPSVYRRALANGIVEILAVYSSSILHIEQLLLSETMPILATVTQGLNKFFSLLPPLYELILKIERGDIRGGELLNLLHKKCHCGVPELQTCIQRLLWHGHQVMYNQLASWMVYGILEDRHGEFFISRQEGRDVENSSSHQEISEKLSRLSTADASLSDWHMGFHISLDMLPEYIPMRVAESILFAGKAVRVLRNPSPSFLSQDDVYPQEPKRFPKIHGFEGRFNFQREPIINTGMRVEDLLPQSEADKIENMLLDLKESSEFHKRSFECAVDSIQAIAASHLWQLVVVRADLNGHLKALKDYFLLAKGDFFQCFLEESRQLMRLPPRQSTAEADLMVPFQLASLKTIGEEDKYFSKVSLRMPSYGITVKPSLLNVPKATSAAADGISGASISNASSEMSVDGWDGIALEYSIEWPLHLFFTQEVLSRYLKVFQYLLRLKRTQMELEKLWASVMHQYHSIFAKNKKSDQDKSPITQQRDQRFRSMWRVREHMAFLIRNLQFYIQVDVIESQWNILQSHIQDSHDFTELVGFHQEYLSALISQTFLDIGSVSRILDGIMKLCLQFCWNIENQDNFSNTSELEHIAEEFNKKSNSLYTILRSSRLAGSQRTPFLRRFLLRLNLNSFFESTAKEVMNVVRPRPTFPGLNQR.

This sequence belongs to the TUBGCP family.

It localises to the cytoplasm. The protein resides in the cytoskeleton. The protein localises to the microtubule organizing center. In terms of biological role, gamma-tubulin complex is necessary for microtubule nucleation at the microtubule organizing centers (MTOCs). This Medicago truncatula (Barrel medic) protein is Gamma-tubulin complex component 4 homolog (85P).